The chain runs to 386 residues: Glucose-1-phosphate adenylyltransferase (386 aa).

Residues tyrosine 99, glycine 164, 179 to 180 (EK), and serine 190 each bind alpha-D-glucose 1-phosphate.

It belongs to the bacterial/plant glucose-1-phosphate adenylyltransferase family. As to quaternary structure, homotetramer.

The enzyme catalyses alpha-D-glucose 1-phosphate + ATP + H(+) = ADP-alpha-D-glucose + diphosphate. The protein operates within glycan biosynthesis; glycogen biosynthesis. In terms of biological role, involved in the biosynthesis of ADP-glucose, a building block required for the elongation reactions to produce glycogen. Catalyzes the reaction between ATP and alpha-D-glucose 1-phosphate (G1P) to produce pyrophosphate and ADP-Glc. In Clostridioides difficile (strain 630) (Peptoclostridium difficile), this protein is Glucose-1-phosphate adenylyltransferase.